The sequence spans 265 residues: MKVIRKLKAKRVVIKVGTSTLVYPDGSINLRAIDQLAFVISAMRHRGREVVLVSSGAIGVGLNYMGLKQRPKAIPEQQAIAAIGQTELISIYKERFAIYEQKIGQLLLTRDIFVYPKSHHNVLNTFEALLKQNVVPIVNENDTVAVDELDHETKFGDNDQLSAIVATNIGADLLIMLSDIDGFYDGNPNADARAQLLGHIEKVDQHTYKLAGGSGSRFGTGGMVTKLKAAERMIDANGQMILANGADPTIIFQILAGEPVGTLFG.

Lys-15 serves as a coordination point for ATP. Residues Ser-55, Asp-142, and Asn-158 each coordinate substrate. Residues 178 to 179 (SD) and 220 to 226 (TGGMVTK) each bind ATP.

It belongs to the glutamate 5-kinase family.

It is found in the cytoplasm. The enzyme catalyses L-glutamate + ATP = L-glutamyl 5-phosphate + ADP. It functions in the pathway amino-acid biosynthesis; L-proline biosynthesis; L-glutamate 5-semialdehyde from L-glutamate: step 1/2. In terms of biological role, catalyzes the transfer of a phosphate group to glutamate to form L-glutamate 5-phosphate. This chain is Glutamate 5-kinase, found in Lactiplantibacillus plantarum (strain ATCC BAA-793 / NCIMB 8826 / WCFS1) (Lactobacillus plantarum).